The following is a 481-amino-acid chain: Trigger factor (481 aa).

Residues 161–298 (GDQLTATVQT…VSEIQNRQLP (138 aa)) enclose the PPIase FKBP-type domain. The disordered stretch occupies residues 173–245 (DGVPLHKLDE…PTTLIMEERR (73 aa)). The span at 182–235 (EEDDDDDDDDDDDDDDDDDDDDDDDDDDDDDDDDDDDDDDDDDDDDDDDDDEGE) shows a compositional bias: acidic residues.

The protein belongs to the FKBP-type PPIase family. Tig subfamily.

It localises to the cytoplasm. It catalyses the reaction [protein]-peptidylproline (omega=180) = [protein]-peptidylproline (omega=0). Functionally, involved in protein export. Acts as a chaperone by maintaining the newly synthesized protein in an open conformation. Functions as a peptidyl-prolyl cis-trans isomerase. The polypeptide is Trigger factor (Herpetosiphon aurantiacus (strain ATCC 23779 / DSM 785 / 114-95)).